Consider the following 146-residue polypeptide: Snaclec alboaggregin-B subunit beta (146 aa).

Residues 1–23 (MGRFIFGSFGLLVLFLSLSGTGA) form the signal peptide. Positions 24-143 (DCPSDWSSYD…CSRTYPFVCK (120 aa)) constitute a C-type lectin domain. Intrachain disulfides connect cysteine 25–cysteine 36, cysteine 53–cysteine 142, and cysteine 119–cysteine 134.

This sequence belongs to the snaclec family. As to quaternary structure, heterodimer of subunits alpha and beta; disulfide-linked. As to expression, expressed by the venom gland.

It localises to the secreted. In terms of biological role, weakly agglutinates platelets at high doses by binding to GPIbalpha (GP1BA). The sequence is that of Snaclec alboaggregin-B subunit beta from Trimeresurus albolabris (White-lipped pit viper).